The sequence spans 454 residues: tRNA modification GTPase MnmE (454 aa).

Residues R23, E86, and R125 each contribute to the (6S)-5-formyl-5,6,7,8-tetrahydrofolate site. The region spanning 221–376 is the TrmE-type G domain; the sequence is GLTLAIVGRP…LREQILRMVS (156 aa). N231 contacts K(+). GTP-binding positions include 231–236, 250–256, and 275–278; these read NVGKSS, TAIPGTT, and DTAG. Mg(2+) is bound at residue S235. Residues T250, I252, and T255 each coordinate K(+). Residue T256 participates in Mg(2+) binding. K454 contacts (6S)-5-formyl-5,6,7,8-tetrahydrofolate.

This sequence belongs to the TRAFAC class TrmE-Era-EngA-EngB-Septin-like GTPase superfamily. TrmE GTPase family. Homodimer. Heterotetramer of two MnmE and two MnmG subunits. Requires K(+) as cofactor.

Its subcellular location is the cytoplasm. Its function is as follows. Exhibits a very high intrinsic GTPase hydrolysis rate. Involved in the addition of a carboxymethylaminomethyl (cmnm) group at the wobble position (U34) of certain tRNAs, forming tRNA-cmnm(5)s(2)U34. This Koribacter versatilis (strain Ellin345) protein is tRNA modification GTPase MnmE.